The following is a 409-amino-acid chain: Elongation factor Tu, chloroplastic (409 aa).

The region spanning lysine 10 to glutamate 214 is the tr-type G domain. Positions glycine 19–threonine 26 are G1. Glycine 19 to threonine 26 is a binding site for GTP. Residue threonine 26 coordinates Mg(2+). The interval glycine 60–asparagine 64 is G2. The G3 stretch occupies residues aspartate 81–glycine 84. GTP is bound by residues aspartate 81–histidine 85 and asparagine 136–aspartate 139. Residues asparagine 136–aspartate 139 are G4. The G5 stretch occupies residues serine 174–leucine 176.

It belongs to the TRAFAC class translation factor GTPase superfamily. Classic translation factor GTPase family. EF-Tu/EF-1A subfamily.

The protein localises to the plastid. The protein resides in the chloroplast. The catalysed reaction is GTP + H2O = GDP + phosphate + H(+). In terms of biological role, GTP hydrolase that promotes the GTP-dependent binding of aminoacyl-tRNA to the A-site of ribosomes during protein biosynthesis. The protein is Elongation factor Tu, chloroplastic (tufA) of Phaeodactylum tricornutum (strain CCAP 1055/1).